We begin with the raw amino-acid sequence, 481 residues long: Beta-amyrin 28-monooxygenase (481 aa).

Residues 4-24 (FYVPLLSLFVLFVSLSFYFLF) form a helical membrane-spanning segment. Cys428 lines the heme pocket.

This sequence belongs to the cytochrome P450 family. The cofactor is heme.

The protein localises to the membrane. The enzyme catalyses beta-amyrin + 3 reduced [NADPH--hemoprotein reductase] + 3 O2 = oleanolate + 3 oxidized [NADPH--hemoprotein reductase] + 4 H2O + 4 H(+). Its function is as follows. Catalyzes the oxidation of the methyl group to a carboxyl group at the C-28 position of beta-amyrin to form oleanolate. This Kalopanax septemlobus (Castor aralia) protein is Beta-amyrin 28-monooxygenase.